The primary structure comprises 99 residues: RNA-binding protein Hfq (99 aa).

The region spanning 9–68 (DPYLNALRRERIPVSIYLVNGIKLQGQIESFDQFVILLKNTVNQMVYKHAISTVVPARSV) is the Sm domain. A disordered region spans residues 67-99 (SVSHHNNNAQQQYQQQAAQAASAQSNETSSQAE). Positions 72–99 (NNNAQQQYQQQAAQAASAQSNETSSQAE) are enriched in low complexity.

Belongs to the Hfq family. In terms of assembly, homohexamer.

Its function is as follows. RNA chaperone that binds small regulatory RNA (sRNAs) and mRNAs to facilitate mRNA translational regulation in response to envelope stress, environmental stress and changes in metabolite concentrations. Also binds with high specificity to tRNAs. This chain is RNA-binding protein Hfq, found in Actinobacillus succinogenes (strain ATCC 55618 / DSM 22257 / CCUG 43843 / 130Z).